The following is a 473-amino-acid chain: UDP-N-acetylmuramate--L-alanine ligase (473 aa).

Position 119 to 125 (119 to 125 (GTHGKTT)) interacts with ATP.

Belongs to the MurCDEF family.

Its subcellular location is the cytoplasm. It catalyses the reaction UDP-N-acetyl-alpha-D-muramate + L-alanine + ATP = UDP-N-acetyl-alpha-D-muramoyl-L-alanine + ADP + phosphate + H(+). It participates in cell wall biogenesis; peptidoglycan biosynthesis. Functionally, cell wall formation. This Caulobacter vibrioides (strain NA1000 / CB15N) (Caulobacter crescentus) protein is UDP-N-acetylmuramate--L-alanine ligase.